The primary structure comprises 642 residues: 1-deoxy-D-xylulose-5-phosphate synthase 2 (642 aa).

Thiamine diphosphate is bound by residues histidine 79 and 120–122 (AHS). Aspartate 155 serves as a coordination point for Mg(2+). Residues 156–157 (GS), asparagine 184, tyrosine 293, and glutamate 375 each bind thiamine diphosphate. Asparagine 184 is a binding site for Mg(2+).

It belongs to the transketolase family. DXPS subfamily. Homodimer. Mg(2+) is required as a cofactor. Thiamine diphosphate serves as cofactor.

It catalyses the reaction D-glyceraldehyde 3-phosphate + pyruvate + H(+) = 1-deoxy-D-xylulose 5-phosphate + CO2. It functions in the pathway metabolic intermediate biosynthesis; 1-deoxy-D-xylulose 5-phosphate biosynthesis; 1-deoxy-D-xylulose 5-phosphate from D-glyceraldehyde 3-phosphate and pyruvate: step 1/1. Its function is as follows. Catalyzes the acyloin condensation reaction between C atoms 2 and 3 of pyruvate and glyceraldehyde 3-phosphate to yield 1-deoxy-D-xylulose-5-phosphate (DXP). The polypeptide is 1-deoxy-D-xylulose-5-phosphate synthase 2 (Roseobacter denitrificans (strain ATCC 33942 / OCh 114) (Erythrobacter sp. (strain OCh 114))).